We begin with the raw amino-acid sequence, 406 residues long: Diaminopimelate decarboxylase (406 aa).

Lysine 52 carries the post-translational modification N6-(pyridoxal phosphate)lysine. Residues glycine 231 and 265-268 (EPGR) contribute to the pyridoxal 5'-phosphate site. Residues arginine 268, arginine 304, and tyrosine 308 each contribute to the substrate site. The active-site Proton donor is cysteine 334. Substrate contacts are provided by glutamate 335 and tyrosine 362. A pyridoxal 5'-phosphate-binding site is contributed by tyrosine 362.

This sequence belongs to the Orn/Lys/Arg decarboxylase class-II family. LysA subfamily. As to quaternary structure, homodimer. Pyridoxal 5'-phosphate is required as a cofactor.

The catalysed reaction is meso-2,6-diaminopimelate + H(+) = L-lysine + CO2. The protein operates within amino-acid biosynthesis; L-lysine biosynthesis via DAP pathway; L-lysine from DL-2,6-diaminopimelate: step 1/1. Its function is as follows. Specifically catalyzes the decarboxylation of meso-diaminopimelate (meso-DAP) to L-lysine. In Neisseria meningitidis serogroup A / serotype 4A (strain DSM 15465 / Z2491), this protein is Diaminopimelate decarboxylase.